The primary structure comprises 97 residues: Protein CYSTEINE-RICH TRANSMEMBRANE MODULE 7 (97 aa).

The tract at residues 1–27 (MASYHVSHDSYQSPGPSPLYQPIIEAP) is disordered. The span at 15–27 (GPSPLYQPIIEAP) shows a compositional bias: pro residues. Residues 68–88 (YVGCFPFLRSCLTTLCCCWFV) traverse the membrane as a helical segment.

Belongs to the CYSTM1 family. Homodimer and heterodimers. Interacts with CYSTM3, CYSTM4, CYSTM5, CYSTM6, CYSTM10, WIH1/CYSTM13 and CYSTM11. Binds weakly to CYSTM1, CYSTM2 and CYSTM12. As to expression, mostly expressed in siliques and, to a lower extent, in stems, roots, leaves and flowers.

The protein localises to the cell membrane. Functionally, involved in resistance to abiotic stress. The chain is Protein CYSTEINE-RICH TRANSMEMBRANE MODULE 7 from Arabidopsis thaliana (Mouse-ear cress).